We begin with the raw amino-acid sequence, 303 residues long: Ornithine carbamoyltransferase (303 aa).

Carbamoyl phosphate is bound by residues 52-55 (STRT), Gln-79, Arg-103, and 130-133 (HPCQ). Residues Asn-161, Asp-221, and 225–226 (SM) contribute to the L-ornithine site. Carbamoyl phosphate contacts are provided by residues 260–261 (CL) and Arg-288.

Belongs to the aspartate/ornithine carbamoyltransferase superfamily. OTCase family.

It is found in the cytoplasm. It carries out the reaction carbamoyl phosphate + L-ornithine = L-citrulline + phosphate + H(+). Its pathway is amino-acid biosynthesis; L-arginine biosynthesis; L-arginine from L-ornithine and carbamoyl phosphate: step 1/3. In terms of biological role, reversibly catalyzes the transfer of the carbamoyl group from carbamoyl phosphate (CP) to the N(epsilon) atom of ornithine (ORN) to produce L-citrulline. The polypeptide is Ornithine carbamoyltransferase (argF) (Rhizobium meliloti (strain 1021) (Ensifer meliloti)).